A 175-amino-acid chain; its full sequence is Lipopolysaccharide export system protein LptH (175 aa).

Residues 1-24 form the signal peptide; that stretch reads MRFVNTLPLIFGLTAALGSSMALA.

Belongs to the LptA family. As to quaternary structure, component of the lipopolysaccharide transport and assembly complex. Mainly exists as a dimer in solution. Tends to oligomerize already in solution. The protomers follow one another in a head-to-tail fashion throughout the crystal lattice, yielding a continuous fiber arrangement.

The protein resides in the periplasm. In terms of biological role, involved in the assembly of lipopolysaccharide (LPS). Required for the translocation of LPS from the inner membrane to the outer membrane. May form a bridge between the inner membrane and the outer membrane, via interactions with LptC and LptD, thereby facilitating LPS transfer across the periplasm. Binds LPS. Important for cell envelope stability and essential for growth, cell viability and ability to cause infection in different animal models. This Pseudomonas aeruginosa (strain ATCC 15692 / DSM 22644 / CIP 104116 / JCM 14847 / LMG 12228 / 1C / PRS 101 / PAO1) protein is Lipopolysaccharide export system protein LptH.